The sequence spans 131 residues: Profilin-6 (131 aa).

A disulfide bond links Cys13 and Cys115. Residues 81 to 97 (AVIRGKKGAGGITIKKT) carry the Involved in PIP2 interaction motif. Position 111 is a phosphothreonine (Thr111).

This sequence belongs to the profilin family. In terms of assembly, occurs in many kinds of cells as a complex with monomeric actin in a 1:1 ratio. Phosphorylated by MAP kinases.

The protein localises to the cytoplasm. The protein resides in the cytoskeleton. In terms of biological role, binds to actin and affects the structure of the cytoskeleton. At high concentrations, profilin prevents the polymerization of actin, whereas it enhances it at low concentrations. The polypeptide is Profilin-6 (Phleum pratense (Common timothy)).